Here is a 264-residue protein sequence, read N- to C-terminus: Type III pantothenate kinase (264 aa).

Position 6 to 13 (6 to 13 (DVGNTNIK)) interacts with ATP. Position 108–111 (108–111 (GSDR)) interacts with substrate. The active-site Proton acceptor is the Asp110. Thr134 is an ATP binding site.

The protein belongs to the type III pantothenate kinase family. Homodimer. Requires NH4(+) as cofactor. The cofactor is K(+).

Its subcellular location is the cytoplasm. It catalyses the reaction (R)-pantothenate + ATP = (R)-4'-phosphopantothenate + ADP + H(+). It participates in cofactor biosynthesis; coenzyme A biosynthesis; CoA from (R)-pantothenate: step 1/5. Functionally, catalyzes the phosphorylation of pantothenate (Pan), the first step in CoA biosynthesis. In Ehrlichia canis (strain Jake), this protein is Type III pantothenate kinase.